The following is a 449-amino-acid chain: Serum response factor homolog (449 aa).

The disordered stretch occupies residues 23–166; the sequence is LADPADMYGN…PPANGKKTKG (144 aa). Positions 69–80 are enriched in polar residues; that stretch reads QCQTLHSPQHAS. A compositionally biased stretch (low complexity) spans 81-107; it reads QQQQQQQQQQQQHQQQQQQQQQHPQQQ. Phosphoserine is present on Ser-156. An MADS-box domain is found at 167–225; that stretch reads RVKIKMEYIDNKLRRYTTFSKRKTGIMKKAYELSTLTGTQVMLLVASETGHVYTFATRK. 2 disordered regions span residues 270–360 and 418–449; these read YNIA…GGGS and LTASGSGASGSGTPVKNDASADKPLTIKQEFD. 2 stretches are compositionally biased toward low complexity: residues 317-331 and 345-354; these read SAPPAASCSAATASS and TNSGPSTSTA.

After germ band retraction, high levels of zygotic expression are observed in a distinct subset of peripheral tracheal cells distributed throughout the embryo and low levels in somatic muscle. Expressed in the future intervein tissue of the wing imaginal disk from the third instar larvae until eclosion of the adult fly (at protein level).

It localises to the nucleus. In terms of biological role, required for the formation of intervein tissue of the wing. Acts in a dosage-dependent manner to suppress wing vein formation and promote development of intervein cells. Might play a role in the proper formation and maintenance of the trachea. This is Serum response factor homolog (bs) from Drosophila melanogaster (Fruit fly).